The sequence spans 124 residues: UPF0382 membrane protein HI_1073 (124 aa).

Transmembrane regions (helical) follow at residues 6 to 26, 70 to 90, and 95 to 115; these read LTLVALSGFFCVALGAFAAHG, SMSSWLIGILLFSGSLYALAF, and VIVWITPIGGTLFLIGWISLA.

It belongs to the UPF0382 family.

It is found in the cell membrane. In Haemophilus influenzae (strain ATCC 51907 / DSM 11121 / KW20 / Rd), this protein is UPF0382 membrane protein HI_1073.